A 367-amino-acid chain; its full sequence is tRNA-specific 2-thiouridylase MnmA (367 aa).

ATP contacts are provided by residues Gly13 to Ser20 and Met39. The segment at Asn99 to Asp101 is interaction with target base in tRNA. The Nucleophile role is filled by Cys104. A disulfide bridge connects residues Cys104 and Cys200. Gly128 is a binding site for ATP. Residues Lys150–Gln152 are interaction with tRNA. Catalysis depends on Cys200, which acts as the Cysteine persulfide intermediate. The interaction with tRNA stretch occupies residues Arg307 to Tyr308.

The protein belongs to the MnmA/TRMU family.

The protein localises to the cytoplasm. It catalyses the reaction S-sulfanyl-L-cysteinyl-[protein] + uridine(34) in tRNA + AH2 + ATP = 2-thiouridine(34) in tRNA + L-cysteinyl-[protein] + A + AMP + diphosphate + H(+). Catalyzes the 2-thiolation of uridine at the wobble position (U34) of tRNA, leading to the formation of s(2)U34. In Neisseria gonorrhoeae (strain ATCC 700825 / FA 1090), this protein is tRNA-specific 2-thiouridylase MnmA.